The primary structure comprises 194 residues: Probable thymidylate kinase (194 aa).

ATP is bound at residue 7–14 (GIDGSGKT).

The protein belongs to the thymidylate kinase family.

The catalysed reaction is dTMP + ATP = dTDP + ADP. This is Probable thymidylate kinase (tmk) from Methanothermobacter thermautotrophicus (strain ATCC 29096 / DSM 1053 / JCM 10044 / NBRC 100330 / Delta H) (Methanobacterium thermoautotrophicum).